The primary structure comprises 401 residues: Probable E3 ubiquitin-protein ligase RHC2A (401 aa).

Positions 41–93 are disordered; that stretch reads TPSDSFTTTTTTQHRSPTRFPPPSSSSSTPSASMHADNSPTPTIVTRTRSNRS. The segment covering 76 to 93 has biased composition (polar residues); the sequence is ADNSPTPTIVTRTRSNRS. The segment at 201–242 adopts an RING-type; atypical zinc-finger fold; the sequence is CAVCKENFVLKSSAREMPCNHIYHPDCILPWLAIRNSCPVCR.

It catalyses the reaction S-ubiquitinyl-[E2 ubiquitin-conjugating enzyme]-L-cysteine + [acceptor protein]-L-lysine = [E2 ubiquitin-conjugating enzyme]-L-cysteine + N(6)-ubiquitinyl-[acceptor protein]-L-lysine.. It functions in the pathway protein modification; protein ubiquitination. Its function is as follows. Probable E3 ubiquitin-protein ligase that may possess E3 ubiquitin ligase activity in vitro. In Arabidopsis thaliana (Mouse-ear cress), this protein is Probable E3 ubiquitin-protein ligase RHC2A.